Here is a 568-residue protein sequence, read N- to C-terminus: Zinc finger protein 648 (568 aa).

The span at 1–11 shows a compositional bias: basic and acidic residues; the sequence is MAQVDSQDRWG. A disordered region spans residues 1-106; the sequence is MAQVDSQDRW…MSGKASWSRD (106 aa). 10 C2H2-type zinc fingers span residues 279–301, 307–329, 335–358, 364–386, 392–414, 420–442, 448–470, 476–498, 504–526, and 532–554; these read YACE…RRLH, YQCS…IRTH, YPCP…RNMH, FPCS…QRTH, FRCP…QRVH, FPCP…QTLH, FKCA…QRIH, FPCT…QQIH, FLCA…IRMH, and YQCE…RAKH. The tract at residues 548 to 568 is disordered; that stretch reads QRHRAKHGTCKKEPIPSSSDE.

The protein belongs to the krueppel C2H2-type zinc-finger protein family.

The protein localises to the nucleus. In terms of biological role, may be involved in transcriptional regulation. In Homo sapiens (Human), this protein is Zinc finger protein 648 (ZNF648).